The following is a 211-amino-acid chain: Flagellar calcium-binding protein (211 aa).

Residues 1-29 (MGACGSKGSTSDKGLASDKDGKKAKDRKE) form a disordered region. Basic and acidic residues predominate over residues 15–29 (LASDKDGKKAKDRKE). 4 EF-hand domains span residues 45 to 80 (EAKQRRIELFKKFDKNETGKLCYDEVHSGCLEVLKL), 81 to 116 (DEFTPRVRDITKRAFDKARALGSKLENKGSEDFVEF), 127 to 162 (YDFFELTVMFDEIDASGNMLVDEEELKRAVPKLEAW), and 164 to 199 (AKVEDPAALFKELDKNGTGSVTFDEFAAWASAVKLD). Residues Asp-58, Asn-60, Thr-62, Lys-64, and Glu-69 each coordinate Ca(2+). Residues Asp-140, Ser-142, Asn-144, Glu-151, Asp-177, Asn-179, Thr-181, Ser-183, and Glu-188 each coordinate Ca(2+).

This sequence belongs to the calflagin family.

The protein resides in the cell projection. The protein localises to the cilium. Its subcellular location is the flagellum. Functionally, may contribute to the rapid motility of the trypanosomes, playing a role either in flagellar structure or in calcium metabolism. Could alternate between a GDP-bound inactive form to a calcium/GTP-bound active form. This chain is Flagellar calcium-binding protein (FCABP), found in Trypanosoma cruzi.